Consider the following 484-residue polypeptide: N-succinylglutamate 5-semialdehyde dehydrogenase (484 aa).

221–226 lines the NAD(+) pocket; that stretch reads GSAAAG. Catalysis depends on residues E244 and C278.

It belongs to the aldehyde dehydrogenase family. AstD subfamily.

It carries out the reaction N-succinyl-L-glutamate 5-semialdehyde + NAD(+) + H2O = N-succinyl-L-glutamate + NADH + 2 H(+). It participates in amino-acid degradation; L-arginine degradation via AST pathway; L-glutamate and succinate from L-arginine: step 4/5. Functionally, catalyzes the NAD-dependent reduction of succinylglutamate semialdehyde into succinylglutamate. This chain is N-succinylglutamate 5-semialdehyde dehydrogenase, found in Caulobacter sp. (strain K31).